Consider the following 284-residue polypeptide: MCVVSTKQMLNNAQRGGYAVPAFNIHNLETMQVVVETAANLHAPVIIAGTPGTFTHAGTENLLALVSAMAKQYHHPLAIHLDHHTKFDDIAQKVRSGVRSVMIDASHLPFAQNISRVKEVVDFCHRFDVSVEAELGQLGGQEDDVQVNEADAFYTNPAQAREFAEATGIDSLAVAIGTAHGMYASAPALDFSRLENIRQWVNLPLVLHGASGLSTKDIQQTIKLGICKINVATELKNAFSQALKNYLTEHPEATDPRDYLQSAKSAMRDVVSKVIADCGCEGRA.

Catalysis depends on Asp-82, which acts as the Proton donor. Residues His-83 and His-180 each contribute to the Zn(2+) site. Gly-181 serves as a coordination point for dihydroxyacetone phosphate. His-208 lines the Zn(2+) pocket. Residues 209–211 (GAS) and 230–233 (NVAT) contribute to the dihydroxyacetone phosphate site.

Belongs to the class II fructose-bisphosphate aldolase family. TagBP aldolase GatY subfamily. In terms of assembly, forms a complex with GatZ. The cofactor is Zn(2+).

It carries out the reaction D-tagatofuranose 1,6-bisphosphate = D-glyceraldehyde 3-phosphate + dihydroxyacetone phosphate. It functions in the pathway carbohydrate metabolism; D-tagatose 6-phosphate degradation; D-glyceraldehyde 3-phosphate and glycerone phosphate from D-tagatose 6-phosphate: step 2/2. In terms of biological role, catalytic subunit of the tagatose-1,6-bisphosphate aldolase GatYZ, which catalyzes the reversible aldol condensation of dihydroxyacetone phosphate (DHAP or glycerone-phosphate) with glyceraldehyde 3-phosphate (G3P) to produce tagatose 1,6-bisphosphate (TBP). Requires GatZ subunit for full activity and stability. Is involved in the catabolism of galactitol. The protein is D-tagatose-1,6-bisphosphate aldolase subunit GatY of Escherichia coli (strain 55989 / EAEC).